Reading from the N-terminus, the 144-residue chain is DHIDLEFDVGQCIQASYTAPTAGRTSVNIVASDGTVVLHVDYRKHSGGKPSTGKPWNQILIINSKLGGSWGTEEKVHDVETTIVYNDYTGCKQDADFSIELNQKDIATYAYRTPVNTVSRVEFGNSGNDAVLRKLCVVYPAPSK.

One can recognise a Galectin domain in the interval 1-138 (DHIDLEFDVG…DAVLRKLCVV (138 aa)).

Tetramer.

Lectin that binds beta-galactoside and a wide array of complex carbohydrates. The sequence is that of Galectin a from Aplysina lactuca (Marine sponge).